The chain runs to 351 residues: Glycerol-1-phosphate dehydrogenase [NAD(P)+] (351 aa).

NAD(+) is bound by residues 93–97 and 115–118; these read GKVLD and TTAS. Substrate is bound at residue Asp120. Ser124 contacts NAD(+). Asp167 provides a ligand contact to substrate. Positions 167 and 247 each coordinate Zn(2+). A substrate-binding site is contributed by His251. A Zn(2+)-binding site is contributed by His263.

Belongs to the glycerol-1-phosphate dehydrogenase family. Zn(2+) is required as a cofactor.

It is found in the cytoplasm. The catalysed reaction is sn-glycerol 1-phosphate + NAD(+) = dihydroxyacetone phosphate + NADH + H(+). The enzyme catalyses sn-glycerol 1-phosphate + NADP(+) = dihydroxyacetone phosphate + NADPH + H(+). The protein operates within membrane lipid metabolism; glycerophospholipid metabolism. In terms of biological role, catalyzes the NAD(P)H-dependent reduction of dihydroxyacetonephosphate (DHAP or glycerone phosphate) to glycerol 1-phosphate (G1P). The G1P thus generated is used as the glycerophosphate backbone of phospholipids in the cellular membranes of Archaea. The polypeptide is Glycerol-1-phosphate dehydrogenase [NAD(P)+] (Archaeoglobus fulgidus (strain ATCC 49558 / DSM 4304 / JCM 9628 / NBRC 100126 / VC-16)).